The sequence spans 279 residues: uncharacterized protein (279 aa).

Positions 1-87 (MRVNGRNLTN…DEYIYLGRQI (87 aa)) constitute a Reverse transcriptase domain.

This is an uncharacterized protein from Caenorhabditis elegans.